The following is a 281-amino-acid chain: 2,3,4,5-tetrahydropyridine-2,6-dicarboxylate N-succinyltransferase (281 aa).

Positions 108 and 145 each coordinate substrate.

Belongs to the transferase hexapeptide repeat family. Homotrimer.

Its subcellular location is the cytoplasm. It catalyses the reaction (S)-2,3,4,5-tetrahydrodipicolinate + succinyl-CoA + H2O = (S)-2-succinylamino-6-oxoheptanedioate + CoA. It functions in the pathway amino-acid biosynthesis; L-lysine biosynthesis via DAP pathway; LL-2,6-diaminopimelate from (S)-tetrahydrodipicolinate (succinylase route): step 1/3. The sequence is that of 2,3,4,5-tetrahydropyridine-2,6-dicarboxylate N-succinyltransferase from Parvibaculum lavamentivorans (strain DS-1 / DSM 13023 / NCIMB 13966).